The sequence spans 602 residues: RNA-binding NOB1-like protein (602 aa).

Positions 1-25 (MDPKPTSMWSSIVKKDPPSKPPVND) are disordered. Residues 48–134 (VVDANAIIEG…LKLIALSYTL (87 aa)) form the PINc domain. 2 disordered regions span residues 258–278 (SQGQYDDDDDASDWRPAVSRS) and 301–331 (IQKDQEADKARHTKEANETHAKDSGKNGEDI). Residues 301 to 329 (IQKDQEADKARHTKEANETHAKDSGKNGE) are compositionally biased toward basic and acidic residues. Residues 331–365 (ISSILKDMRLEEESLRALQEETEETNAEATLINGE) adopt a coiled-coil conformation. Residues 452 to 522 (IRQLHRWILK…QYSIPMPKGG (71 aa)) form an NOB1 zinc finger. Zn(2+) contacts are provided by cysteine 462, cysteine 465, cysteine 477, and cysteine 480.

This sequence belongs to the NOB1 family. Component of the small ribosomal subunit, ribosomal RNA processing complex (SSU RRP complex). As to expression, highly expressed in flowers and siliques and at lower levels in roots, hypocotyls, stems, leaves and seeds.

It localises to the nucleus. It is found in the nucleoplasm. The protein localises to the cytoplasm. Functionally, essential protein required during embryogenesis and pollen development. Endonuclease cleaving pre-rRNA at the 3' end of the mature 18S rRNA (D-site); cleaves 20S pre-rRNA in the cytoplasm. Required for processing of 20S pre-rRNA precursor and biogenesis of 40S ribosomal subunits. This Arabidopsis thaliana (Mouse-ear cress) protein is RNA-binding NOB1-like protein.